Here is a 172-residue protein sequence, read N- to C-terminus: Conglutin-7 (172 aa).

An N-terminal signal peptide occupies residues 1–21 (MAKLTILVALALFLLAAHASA). 4 cysteine pairs are disulfide-bonded: C33–C116, C45–C103, C104–C152, and C118–C160. The tract at residues 54–98 (QRDEDSYGRDPYSPSQDPYSPSQDPDRRDPYSPSPYDRRGAGSSQ) is disordered. The segment covering 62–76 (RDPYSPSQDPYSPSQ) has biased composition (low complexity). P67, P74, and P86 each carry 4-hydroxyproline. Residues 77 to 98 (DPDRRDPYSPSPYDRRGAGSSQ) are compositionally biased toward basic and acidic residues.

This sequence belongs to the 2S seed storage albumins family. The hydroxyproline modifications determined by mass spectrometry are probably 4-hydroxyproline as determined for other extracellular plant proteins. In terms of tissue distribution, expressed in seeds, not expressed in leaves, roots and pegs.

Functionally, weak inhibitor of trypsin. The protein is Conglutin-7 of Arachis hypogaea (Peanut).